Consider the following 453-residue polypeptide: Gamma-aminobutyric acid receptor subunit alpha-6 (453 aa).

The first 19 residues, 1–19 (MASSLPWLCIILWLENALG), serve as a signal peptide directing secretion. At 20–243 (KLEVEGNFYS…FHLQRKMGYF (224 aa)) the chain is on the extracellular side. A glycan (N-linked (GlcNAc...) asparagine) is linked at Asn-31. Residue Arg-84 coordinates 4-aminobutanoate. N-linked (GlcNAc...) asparagine glycans are attached at residues Asn-128 and Asn-141. Thr-147 is a 4-aminobutanoate binding site. Cys-156 and Cys-170 are oxidised to a cystine. Residues 244–264 (MIQIYTPCIMTVILSQVSFWI) traverse the membrane as a helical segment. Topologically, residues 265–270 (NKESVP) are cytoplasmic. Residues 271–290 (ARTVFGITTVLTMTTLSISA) form a helical membrane-spanning segment. Residues 291–304 (RHSLPKVSYATAMD) are Extracellular-facing. Residues 305–325 (WFIAVCFAFVFSALIEFAAVN) traverse the membrane as a helical segment. Topologically, residues 326 to 422 (YFTNLQTQKA…GTSKIDQYSR (97 aa)) are cytoplasmic. Thr-403 carries the post-translational modification Phosphothreonine. A helical membrane pass occupies residues 423–443 (ILFPVAFAGFNLVYWVVYLSK). Over 444 to 453 (DTMEVSSSVE) the chain is Extracellular.

The protein belongs to the ligand-gated ion channel (TC 1.A.9) family. Gamma-aminobutyric acid receptor (TC 1.A.9.5) subfamily. GABRA6 sub-subfamily. As to quaternary structure, heteropentamer, formed by a combination of alpha (GABRA1-6), beta (GABRB1-3), gamma (GABRG1-3), delta (GABRD), epsilon (GABRE), rho (GABRR1-3), pi (GABRP) and theta (GABRQ) chains, each subunit exhibiting distinct physiological and pharmacological properties. Binds UBQLN1. Expressed in brain, in cerebellar granule cells.

The protein localises to the postsynaptic cell membrane. It localises to the cell membrane. It carries out the reaction chloride(in) = chloride(out). Functionally, alpha subunit of the heteropentameric ligand-gated chloride channel gated by gamma-aminobutyric acid (GABA), a major inhibitory neurotransmitter in the brain. GABA-gated chloride channels, also named GABA(A) receptors (GABAAR), consist of five subunits arranged around a central pore and contain GABA active binding site(s) located at the alpha and beta subunit interface(s). When activated by GABA, GABAARs selectively allow the flow of chloride anions across the cell membrane down their electrochemical gradient. Alpha-6/GABRA6 subunits are found at both synaptic and extrasynaptic sites. Chloride influx into the postsynaptic neuron following GABAAR opening decreases the neuron ability to generate a new action potential, thereby reducing nerve transmission. Extrasynaptic alpha-6-containing receptors contribute to the tonic GABAergic inhibition. Alpha-6 subunits are also present on glutamatergic synapses. In Homo sapiens (Human), this protein is Gamma-aminobutyric acid receptor subunit alpha-6.